The chain runs to 660 residues: Cysteine--tRNA ligase, cytoplasmic (660 aa).

A compositionally biased stretch (polar residues) spans Met-1–Glu-10. The segment at Met-1–Lys-20 is disordered. Cys-65 is a binding site for Zn(2+). Positions Pro-67–His-77 match the 'HIGH' region motif. Residues Cys-256, His-281, and Glu-285 each coordinate Zn(2+). The 'KMSKS' region motif lies at Lys-314–Ser-318. Lys-317 contributes to the ATP binding site. Disordered regions lie at residues Ile-563 to Lys-584 and Gln-627 to Gln-660. The segment covering Gln-627–Asn-639 has biased composition (basic and acidic residues). Residues Ser-643 to Gln-660 show a composition bias toward low complexity.

Belongs to the class-I aminoacyl-tRNA synthetase family. The cofactor is Zn(2+).

It is found in the cytoplasm. It catalyses the reaction tRNA(Cys) + L-cysteine + ATP = L-cysteinyl-tRNA(Cys) + AMP + diphosphate. The protein is Cysteine--tRNA ligase, cytoplasmic (cysS) of Dictyostelium discoideum (Social amoeba).